The chain runs to 330 residues: Taste receptor type 2 member 117 (330 aa).

Residues 1–16 (MKHFWKILSVISQSTL) are Extracellular-facing. Residues 17–37 (SVILIVELVIGIIGNGFMVLV) traverse the membrane as a helical segment. Residues 38-53 (HCMDWVKKKKMSLVNQ) lie on the Cytoplasmic side of the membrane. The chain crosses the membrane as a helical span at residues 54–74 (ILTALSISRIFQLCLLFISLV). At 75 to 95 (INFSYTDLTTSSRMIQVMYNA) the chain is on the extracellular side. A glycan (N-linked (GlcNAc...) asparagine) is linked at N76. Residues 96–116 (WILANHFSIWIATCLTVLYFL) traverse the membrane as a helical segment. The Cytoplasmic segment spans residues 117-135 (KIANFSNSFFLYLKWRVEK). A helical membrane pass occupies residues 136-156 (VVSVTLLVSLLLLILNILLTN). Over 157-190 (LETDMWTNEYQRNISCSFSSHYYAKCHRQVLRLH) the chain is Extracellular. The N-linked (GlcNAc...) asparagine glycan is linked to N169. A helical transmembrane segment spans residues 191 to 211 (IIFLSVPVVLSLSTFLLLIFS). Topologically, residues 212–239 (LWTHHKRMQQHVQGGRDARTTAHFKALQ) are cytoplasmic. A helical transmembrane segment spans residues 240 to 260 (TVIAFFLLYSIFILSVLIQIW). Topologically, residues 261–269 (KYELLKKNL) are extracellular. A helical membrane pass occupies residues 270–290 (FVVFCEVVYIAFPTFHSYILI). At 291 to 330 (VGDMKLRQACLPLCIIAAEIQTTLCRNFRSLKYFRLCCIF) the chain is on the cytoplasmic side.

Belongs to the G-protein coupled receptor T2R family.

The protein resides in the membrane. Functionally, putative taste receptor which may play a role in the perception of bitterness. This is Taste receptor type 2 member 117 from Mus musculus (Mouse).